The primary structure comprises 239 residues: Sugar fermentation stimulation protein homolog (239 aa).

Belongs to the SfsA family.

The chain is Sugar fermentation stimulation protein homolog from Agrobacterium fabrum (strain C58 / ATCC 33970) (Agrobacterium tumefaciens (strain C58)).